Reading from the N-terminus, the 284-residue chain is F-box protein PP2-B13 (284 aa).

The F-box domain occupies 1–44; that stretch reads MMMLPEACVANILAFTSPADAFSSSEVSSVFRLAGDSDFVWEKF.

This is F-box protein PP2-B13 (PP2B13) from Arabidopsis thaliana (Mouse-ear cress).